Here is a 386-residue protein sequence, read N- to C-terminus: Phosphate acyltransferase (386 aa).

Residues 359-386 are disordered; the sequence is PHRARQDELGENKVVGADQSMTAKATGT. A compositionally biased stretch (polar residues) spans 377-386; that stretch reads QSMTAKATGT.

The protein belongs to the PlsX family. In terms of assembly, homodimer. Probably interacts with PlsY.

The protein resides in the cytoplasm. It catalyses the reaction a fatty acyl-[ACP] + phosphate = an acyl phosphate + holo-[ACP]. Its pathway is lipid metabolism; phospholipid metabolism. Functionally, catalyzes the reversible formation of acyl-phosphate (acyl-PO(4)) from acyl-[acyl-carrier-protein] (acyl-ACP). This enzyme utilizes acyl-ACP as fatty acyl donor, but not acyl-CoA. This Beijerinckia indica subsp. indica (strain ATCC 9039 / DSM 1715 / NCIMB 8712) protein is Phosphate acyltransferase.